The chain runs to 49 residues: Sporulation protein YjcZ (49 aa).

The chain crosses the membrane as a helical span at residues 29–49 (STFVLLVVLFILLIIVGASFF).

This sequence belongs to the SscA family.

Its subcellular location is the membrane. In Bacillus subtilis (strain 168), this protein is Sporulation protein YjcZ (yjcZ).